We begin with the raw amino-acid sequence, 667 residues long: Gamma-tubulin complex component 4 (667 aa).

A disordered region spans residues 425-445 (HKADATQAREGPSRETSPREA).

Belongs to the TUBGCP family. As to quaternary structure, component of the gamma-tubulin ring complex (gTuRC) consisting of TUBGCP2, TUBGCP3, TUBGCP4, TUBGCP5 and TUBGCP6 and gamma-tubulin TUBG1 or TUBG2. TUBGCP2, TUBGCP3, TUBGCP4, TUBGCP5 and TUBGCP6 assemble in a 5:5:2:1:1 stoichiometry; each is associated with a gamma-tubulin, thereby arranging 14 gamma-tubulins in a helical manner. Gamma-tubulin at the first position is blocked by TUBGCP3 at the last position, allowing 13 protafilaments to grow into a microtubule. The gTuRC (via TUBGCP3 and TUBGCP6) interacts with ACTB and MZT1; the interactions form a luminal bridge that stabilizes the initial structure during complex assembly. The gTuRC (via TUBGCP2) interacts with MZT2A/MZT2B and CDK5RAP2 (via CM1 motif); the interactions play a role in gTuRC activation. Interacts with NINL. Interacts with ATF5; the ATF5:PCNT:polyglutamylated tubulin (PGT) tripartite unites the mother centriole and the pericentriolar material (PCM) in the centrosome. In terms of tissue distribution, ubiquitously expressed.

It is found in the cytoplasm. The protein resides in the cytoskeleton. The protein localises to the microtubule organizing center. It localises to the centrosome. In terms of biological role, component of the gamma-tubulin ring complex (gTuRC) which mediates microtubule nucleation. The gTuRC regulates the minus-end nucleation of alpha-beta tubulin heterodimers that grow into microtubule protafilaments, a critical step in centrosome duplication and spindle formation. This chain is Gamma-tubulin complex component 4 (TUBGCP4), found in Homo sapiens (Human).